Consider the following 466-residue polypeptide: Ribulose bisphosphate carboxylase large chain (466 aa).

K5 bears the N6,N6,N6-trimethyllysine mark. Substrate contacts are provided by N114 and T164. The active-site Proton acceptor is K166. K168 is a binding site for substrate. Residues K192, D194, and E195 each contribute to the Mg(2+) site. Position 192 is an N6-carboxylysine (K192). Catalysis depends on H285, which acts as the Proton acceptor. Substrate-binding residues include R286, H318, and S370.

It belongs to the RuBisCO large chain family. Type I subfamily. Heterohexadecamer of 8 large chains and 8 small chains; disulfide-linked. The disulfide link is formed within the large subunit homodimers. Requires Mg(2+) as cofactor. In terms of processing, the disulfide bond which can form in the large chain dimeric partners within the hexadecamer appears to be associated with oxidative stress and protein turnover.

It is found in the plastid. Its subcellular location is the chloroplast. It carries out the reaction 2 (2R)-3-phosphoglycerate + 2 H(+) = D-ribulose 1,5-bisphosphate + CO2 + H2O. It catalyses the reaction D-ribulose 1,5-bisphosphate + O2 = 2-phosphoglycolate + (2R)-3-phosphoglycerate + 2 H(+). In terms of biological role, ruBisCO catalyzes two reactions: the carboxylation of D-ribulose 1,5-bisphosphate, the primary event in carbon dioxide fixation, as well as the oxidative fragmentation of the pentose substrate in the photorespiration process. Both reactions occur simultaneously and in competition at the same active site. The polypeptide is Ribulose bisphosphate carboxylase large chain (Drosera filiformis (Thread-leaved sundew)).